The primary structure comprises 215 residues: Rod-determining factor A (215 aa).

Functionally, involved in cell-shape determination. Required for the formation of rods and wild-type-like motility. This Haloferax volcanii (strain ATCC 29605 / DSM 3757 / JCM 8879 / NBRC 14742 / NCIMB 2012 / VKM B-1768 / DS2) (Halobacterium volcanii) protein is Rod-determining factor A.